We begin with the raw amino-acid sequence, 197 residues long: Small ribosomal subunit protein uS4B (197 aa).

One can recognise an S4 RNA-binding domain in the interval 88 to 151; it reads CRLDNIAYRI…RKNDEFADNF (64 aa).

This sequence belongs to the universal ribosomal protein uS4 family. As to quaternary structure, part of the 30S ribosomal subunit. Contacts protein S5. The interaction surface between S4 and S5 is involved in control of translational fidelity.

One of the primary rRNA binding proteins, it binds directly to 16S rRNA where it nucleates assembly of the body of the 30S subunit. Functionally, with S5 and S12 plays an important role in translational accuracy. This Clostridium botulinum (strain Hall / ATCC 3502 / NCTC 13319 / Type A) protein is Small ribosomal subunit protein uS4B.